The sequence spans 160 residues: SsrA-binding protein (160 aa).

It belongs to the SmpB family.

The protein localises to the cytoplasm. Functionally, required for rescue of stalled ribosomes mediated by trans-translation. Binds to transfer-messenger RNA (tmRNA), required for stable association of tmRNA with ribosomes. tmRNA and SmpB together mimic tRNA shape, replacing the anticodon stem-loop with SmpB. tmRNA is encoded by the ssrA gene; the 2 termini fold to resemble tRNA(Ala) and it encodes a 'tag peptide', a short internal open reading frame. During trans-translation Ala-aminoacylated tmRNA acts like a tRNA, entering the A-site of stalled ribosomes, displacing the stalled mRNA. The ribosome then switches to translate the ORF on the tmRNA; the nascent peptide is terminated with the 'tag peptide' encoded by the tmRNA and targeted for degradation. The ribosome is freed to recommence translation, which seems to be the essential function of trans-translation. The polypeptide is SsrA-binding protein (Mycobacterium bovis (strain ATCC BAA-935 / AF2122/97)).